A 464-amino-acid chain; its full sequence is Siroheme synthase (464 aa).

Positions 1–203 (MKYLPLFHNL…GQGAEAERLL (203 aa)) are precorrin-2 dehydrogenase /sirohydrochlorin ferrochelatase. Residues 22-23 (EI) and 43-44 (PE) each bind NAD(+). At Ser128 the chain carries Phosphoserine. Residues 216 to 464 (GEVYLVGAGP…AWFEGAQGQI (249 aa)) are uroporphyrinogen-III C-methyltransferase. Residue Pro225 coordinates S-adenosyl-L-methionine. Catalysis depends on Asp248, which acts as the Proton acceptor. Lys270 functions as the Proton donor in the catalytic mechanism. S-adenosyl-L-methionine is bound by residues 301–303 (GGD), Ile306, 331–332 (TA), Met383, and Gly412.

The protein in the N-terminal section; belongs to the precorrin-2 dehydrogenase / sirohydrochlorin ferrochelatase family. In the C-terminal section; belongs to the precorrin methyltransferase family.

It catalyses the reaction uroporphyrinogen III + 2 S-adenosyl-L-methionine = precorrin-2 + 2 S-adenosyl-L-homocysteine + H(+). The catalysed reaction is precorrin-2 + NAD(+) = sirohydrochlorin + NADH + 2 H(+). It carries out the reaction siroheme + 2 H(+) = sirohydrochlorin + Fe(2+). The protein operates within cofactor biosynthesis; adenosylcobalamin biosynthesis; precorrin-2 from uroporphyrinogen III: step 1/1. It functions in the pathway cofactor biosynthesis; adenosylcobalamin biosynthesis; sirohydrochlorin from precorrin-2: step 1/1. Its pathway is porphyrin-containing compound metabolism; siroheme biosynthesis; precorrin-2 from uroporphyrinogen III: step 1/1. It participates in porphyrin-containing compound metabolism; siroheme biosynthesis; siroheme from sirohydrochlorin: step 1/1. The protein operates within porphyrin-containing compound metabolism; siroheme biosynthesis; sirohydrochlorin from precorrin-2: step 1/1. Multifunctional enzyme that catalyzes the SAM-dependent methylations of uroporphyrinogen III at position C-2 and C-7 to form precorrin-2 via precorrin-1. Then it catalyzes the NAD-dependent ring dehydrogenation of precorrin-2 to yield sirohydrochlorin. Finally, it catalyzes the ferrochelation of sirohydrochlorin to yield siroheme. In Pseudomonas fluorescens (strain Pf0-1), this protein is Siroheme synthase.